Reading from the N-terminus, the 141-residue chain is Drosulfakinins (141 aa).

Positions 1 to 31 (MGLRSCTHLATLFMTLWAVAFCFLVVVPIPA) are cleaved as a signal peptide. The propeptide occupies 32 to 73 (QTTSLQNAKDDRRLQELESKIGAESDQTNANLVGPSFSRFGD). Position 82 is a phenylalanine amide (phenylalanine 82). A propeptide spanning residues 86 to 111 (VPLISRPMIPIELDLLMDNDDERTKA) is cleaved from the precursor. At tyrosine 117 the chain carries Sulfotyrosine. Phenylalanine 122 is subject to Phenylalanine amide. Tyrosine 134 is modified (sulfotyrosine). Phenylalanine 139 is modified (phenylalanine amide).

Belongs to the gastrin/cholecystokinin family.

It is found in the secreted. Functionally, drosulfakinin-0 (DSK 0) plays diverse biological roles including regulating gut muscle contraction in adults but not in larvae. The polypeptide is Drosulfakinins (Drosophila simulans (Fruit fly)).